The following is a 102-amino-acid chain: ATP-dependent Clp protease adapter protein ClpS (102 aa).

Belongs to the ClpS family. As to quaternary structure, binds to the N-terminal domain of the chaperone ClpA.

Its function is as follows. Involved in the modulation of the specificity of the ClpAP-mediated ATP-dependent protein degradation. The polypeptide is ATP-dependent Clp protease adapter protein ClpS (Shewanella sediminis (strain HAW-EB3)).